Reading from the N-terminus, the 1191-residue chain is Protogenin (1191 aa).

Positions 1–23 (MAPPVRPGMLPLLLLLLLPPLGS) are cleaved as a signal peptide. Ig-like domains lie at 24–124 (VPGV…AHLT), 126–216 (STIS…ASLT), 229–316 (PTII…ATLT), and 321–405 (PSFV…ARLT). Residues 24 to 943 (VPGVWSFSEL…YYHLDQKSMT (920 aa)) lie on the Extracellular side of the membrane. 2 disulfide bridges follow: Cys-54–Cys-107 and Cys-150–Cys-199. Asn-237 carries an N-linked (GlcNAc...) asparagine glycan. 2 cysteine pairs are disulfide-bonded: Cys-250–Cys-298 and Cys-342–Cys-389. Fibronectin type-III domains are found at residues 415 to 509 (APYN…TLED), 511 to 607 (PLRP…TPKA), 612 to 711 (APKS…VRDR), 718 to 811 (PPHH…TLPE), and 816 to 911 (PPVG…VLPK). An N-linked (GlcNAc...) asparagine glycan is attached at Asn-624. A helical membrane pass occupies residues 944-964 (GIAVGVGIALTCILICVLILI). Residues 965-1191 (YRSKARKSSA…LRYAAEGFPV (227 aa)) lie on the Cytoplasmic side of the membrane. 2 disordered regions span residues 975 to 1010 (SKTA…ETAE) and 1079 to 1191 (ISDE…GFPV). The span at 977–990 (TAQSGTQPLSQASA) shows a compositional bias: polar residues. A compositionally biased stretch (basic and acidic residues) spans 1104–1132 (DTEHSANSEGSHETGDSGRFSHESNDEIH). 2 stretches are compositionally biased toward polar residues: residues 1135–1146 (SVISSTPPTSNP) and 1171–1180 (EQTSAPQTSA).

It belongs to the immunoglobulin superfamily. DCC family. In terms of tissue distribution, from mid-gastrulation to early somite stages, restricted to posterior neural plate and mesoderm with an anterior limit at the level of the rhombencephalon. Posterior restriction is progressively lost during somitogenesis. Expression is maintained in the neural tube and paraxial mesoderm during this process. As development proceeds, further restricted to the dorsal parts of the spinal cord and somites. In parallel, expression progresses caudally during axis elongation.

It localises to the membrane. Its function is as follows. May play a role in anteroposterior axis elongation. The chain is Protogenin from Mus musculus (Mouse).